Reading from the N-terminus, the 346-residue chain is Phosphate acyltransferase (346 aa).

Belongs to the PlsX family. In terms of assembly, homodimer. Probably interacts with PlsY.

Its subcellular location is the cytoplasm. It carries out the reaction a fatty acyl-[ACP] + phosphate = an acyl phosphate + holo-[ACP]. Its pathway is lipid metabolism; phospholipid metabolism. Its function is as follows. Catalyzes the reversible formation of acyl-phosphate (acyl-PO(4)) from acyl-[acyl-carrier-protein] (acyl-ACP). This enzyme utilizes acyl-ACP as fatty acyl donor, but not acyl-CoA. This is Phosphate acyltransferase from Brucella suis biovar 1 (strain 1330).